A 176-amino-acid chain; its full sequence is HTH-type transcriptional regulator DctR (176 aa).

In terms of domain architecture, HTH luxR-type spans 109-174 (VPEANVSLSR…ELVRHQHIDY (66 aa)). Residues 133–152 (TEDILEKLKISLKTFYCHKH) constitute a DNA-binding region (H-T-H motif).

Its function is as follows. May act as a transcriptional regulator of dctA. In Shigella flexneri, this protein is HTH-type transcriptional regulator DctR (dctR).